A 181-amino-acid chain; its full sequence is Endoribonuclease YbeY (181 aa).

Residues H115, H119, and H125 each contribute to the Zn(2+) site.

This sequence belongs to the endoribonuclease YbeY family. It depends on Zn(2+) as a cofactor.

The protein localises to the cytoplasm. Functionally, single strand-specific metallo-endoribonuclease involved in late-stage 70S ribosome quality control and in maturation of the 3' terminus of the 16S rRNA. The polypeptide is Endoribonuclease YbeY (Bifidobacterium adolescentis (strain ATCC 15703 / DSM 20083 / NCTC 11814 / E194a)).